The following is a 378-amino-acid chain: Squalene methyltransferase 1 (378 aa).

The helical transmembrane segment at 17-37 (LLTWKGVAGLVVAITLGYLII) threads the bilayer.

It belongs to the class I-like SAM-binding methyltransferase superfamily. Erg6/SMT family.

It localises to the microsome membrane. It carries out the reaction squalene + 2 S-adenosyl-L-methionine = 3,22-dimethyl-1,2,23,24-tetradehydro-2,3,22,23-tetrahydrosqualene + 2 S-adenosyl-L-homocysteine + 2 H(+). In terms of biological role, converts squalene to mono- and dimethyl derivatives, but not to tri- and tetramethylated products. Unable to methylate cycloartenol, zymosterol or lanosterol. Methylates both C-3 and C22 positions, but only C-3 position in monomethylated products. Produces mainly dimethylated squalene. This Botryococcus braunii (Green alga) protein is Squalene methyltransferase 1 (TMT-1).